Reading from the N-terminus, the 1002-residue chain is MVVRYSLLMKVSFAILIFLVGCNENATSSNDQYLTDPDISEQTKKPSRPIIDEKNKGVTDTSVTIEWDKIECEKNFSHYNVIVYRKDRIEDVITIRTRNNSVFIDDLKPNSQYSIDVSSCLHSACSESAKIEFITLNEIDYYHTTEIEKNVYGSLEGEVRFVQTHVISPEGRKNEPEIITGRDALILFKPSIKNSSSILMKIYSEDGLTSKVVMKSPSMLPKTDQPIDIDENNKVVSYSNSYWSAEIPWNKMKSGMSLHFEDENGNLGIIESERIKFSAPSELIIQNIDLGMLYKPRGRNIVIKELERTAVDYFQKVPVSKLIFSDYTPIHFEKITLPNGSVYTEKSADIGGWHQGDMREAVGKALVSTGINNANLGIVASSGYSQQYNRLTNHITAHTNIGYYNNGVVVHGGSGGGGIVTLENTLHNEWSHELGHNYGLGHYVAGGTSHGPDTSWGWDGYYKRFIANFDWKRSPQSNIRPDNQEVVKPFMDKYTYLWDAMSGGYDHQNGIISRYTLHHPYVARIIQDWLKNGAVVINNDYMVWDELKNIYVYKGTNFKVPIKKGVPVVTILGVYDPDKINPSQLYPPTYSNYGNIFDLEKPRSESSLKGWQYVKDVNYLDRVNTHWHTMLVNRKEEKICRFSYLSPKGKKFEFLGYEDIENKICTGSRSIHYLEDGKKNPIESKYNDYFLLSIDGDGEISYVPDSTIGESKICSLKMSGTVYGAGFIKGNSCRQIDGVFMNGFQWAFTLNQSGVNSTYTWSNECVLKIKDKDNNIESISIPNYRIEKNQSNKIHLNISREKPIIDINVYCGEHELTSIKVSDNPDIKLLKGPIIVGQEHGYTSYEPKLPSGWFKHYDNFEPKNEINHELGKMRVNDNDEYICRFNFSDSDREMKFVGYVSQLSESKYICTGGSEIYYKKNDINIELSSKENDFEWLSVRDKNLIGSKIEFDNNKTLCVLDNRSFYGAGYLDENNRCTQDRQIHWSNGKQWLFSTYKTMTYH.

An N-terminal signal peptide occupies residues 1-21 (MVVRYSLLMKVSFAILIFLVG). C22 is lipidated: N-palmitoyl cysteine. Residue C22 is the site of S-diacylglycerol cysteine attachment. The disordered stretch occupies residues 31–53 (DQYLTDPDISEQTKKPSRPIIDE). The Fibronectin type-III domain maps to 45 to 139 (KPSRPIIDEK…KIEFITLNEI (95 aa)). Residues 282–536 (ELIIQNIDLG…QDWLKNGAVV (255 aa)) enclose the Peptidase M66 domain. A Zn(2+)-binding site is contributed by H432. The active site involves E433. 2 residues coordinate Zn(2+): H436 and H442.

Zn(2+) is required as a cofactor.

It localises to the cell membrane. In Vibrio cholerae serotype O1 (strain ATCC 39541 / Classical Ogawa 395 / O395), this protein is ToxR-activated gene A lipoprotein (tagA).